The sequence spans 618 residues: UvrABC system protein C (618 aa).

The 79-residue stretch at 19–97 folds into the GIY-YIG domain; sequence SEPGIYRMLD…IKALRPKYNV (79 aa). The UVR domain maps to 208-243; it reads QIILDELAERMKNAVSQLNFEEAAVLRDQIKNLRLI.

Belongs to the UvrC family. As to quaternary structure, interacts with UvrB in an incision complex.

Its subcellular location is the cytoplasm. In terms of biological role, the UvrABC repair system catalyzes the recognition and processing of DNA lesions. UvrC both incises the 5' and 3' sides of the lesion. The N-terminal half is responsible for the 3' incision and the C-terminal half is responsible for the 5' incision. The polypeptide is UvrABC system protein C (Legionella pneumophila (strain Lens)).